Consider the following 171-residue polypeptide: MPLLDSFCVDHVKMKAPGVRLAKSMKTPKGDDISVFDLRFCKPNEEILPEKGTHTLEHLFAGFMRNHLNGNGVEIIDISPMGCRTGFYMSVIGTPSEEAVKKAWLASMKDILEVKDQDKIPELNKFQCGTYKMHSLDEAHAIASKILAQGLVIINNDEIKLDVDAMGLKKH.

Fe cation-binding residues include His54, His58, and Cys128.

It belongs to the LuxS family. Homodimer. It depends on Fe cation as a cofactor.

The catalysed reaction is S-(5-deoxy-D-ribos-5-yl)-L-homocysteine = (S)-4,5-dihydroxypentane-2,3-dione + L-homocysteine. In terms of biological role, involved in the synthesis of autoinducer 2 (AI-2) which is secreted by bacteria and is used to communicate both the cell density and the metabolic potential of the environment. The regulation of gene expression in response to changes in cell density is called quorum sensing. Catalyzes the transformation of S-ribosylhomocysteine (RHC) to homocysteine (HC) and 4,5-dihydroxy-2,3-pentadione (DPD). This Campylobacter concisus (strain 13826) protein is S-ribosylhomocysteine lyase.